A 198-amino-acid chain; its full sequence is Autophagy-related protein 16 (198 aa).

Positions glutamate 24–lysine 177 form a coiled coil.

It belongs to the ATG16 family. In terms of assembly, homodimer. Part of the ATG5-ATG12/ATG16 complex. Several units of each may be present in this complex. Interacts directly with ATG12.

Its subcellular location is the preautophagosomal structure membrane. In terms of biological role, stabilizes the ATG5-ATG12 conjugate. The ATG5-ATG12/ATG16 complex is required for efficient promotion of ATG8-conjugation to phosphatidylethanolamine and ATG8 localization to the pre-autophagosomal structure (PAS). Also recruits ATG3 to the PAS. Involved in endoplasmic reticulum-specific autophagic process and is essential for the survival of cells subjected to severe ER stress. Autophagy is required for proper vegetative growth, asexual/sexual reproduction, and full virulence. Autophagy is particularly involved in the biosynthesis of deoxynivalenol (DON), an important virulence determinant. In Gibberella zeae (strain ATCC MYA-4620 / CBS 123657 / FGSC 9075 / NRRL 31084 / PH-1) (Wheat head blight fungus), this protein is Autophagy-related protein 16.